The primary structure comprises 317 residues: Anamorsin homolog 2 (317 aa).

Residues 1–162 (MAKKVGVLLF…KPSWDSASVF (162 aa)) are N-terminal SAM-like domain. Positions 163-229 (QLRKGSSQKG…EDDLLTEEDL (67 aa)) are linker. Residues Cys-240, Cys-247, Cys-250, and Cys-252 each contribute to the [2Fe-2S] cluster site. A fe-S binding site A region spans residues 240 to 252 (CAPTKKACKNCTC). Cys-278, Cys-281, Cys-289, and Cys-292 together coordinate [4Fe-4S] cluster. 2 consecutive short sequence motifs (cx2C motif) follow at residues 278-281 (CGSC) and 289-292 (CAGC). Residues 278 to 292 (CGSCGLGDAFRCAGC) form a fe-S binding site B region.

Belongs to the anamorsin family. As to quaternary structure, monomer. The cofactor is [2Fe-2S] cluster. [4Fe-4S] cluster serves as cofactor.

It is found in the cytoplasm. The protein resides in the mitochondrion intermembrane space. Component of the cytosolic iron-sulfur (Fe-S) protein assembly (CIA) machinery. Required for the maturation of extramitochondrial Fe-S proteins. Part of an electron transfer chain functioning in an early step of cytosolic Fe-S biogenesis, facilitating the de novo assembly of a [4Fe-4S] cluster on the cytosolic Fe-S scaffold complex. Electrons are transferred from NADPH via a FAD- and FMN-containing diflavin oxidoreductase. Together with the diflavin oxidoreductase, also required for the assembly of the diferric tyrosyl radical cofactor of ribonucleotide reductase (RNR), probably by providing electrons for reduction during radical cofactor maturation in the catalytic small subunit. The sequence is that of Anamorsin homolog 2 from Physcomitrium patens (Spreading-leaved earth moss).